The sequence spans 288 residues: tRNA-cytidine(32) 2-sulfurtransferase (288 aa).

Residues 70–75 (SGGKDS) carry the PP-loop motif motif. Residues Cys-145, Cys-148, and Cys-236 each contribute to the [4Fe-4S] cluster site.

This sequence belongs to the TtcA family. In terms of assembly, homodimer. The cofactor is Mg(2+). Requires [4Fe-4S] cluster as cofactor.

Its subcellular location is the cytoplasm. It catalyses the reaction cytidine(32) in tRNA + S-sulfanyl-L-cysteinyl-[cysteine desulfurase] + AH2 + ATP = 2-thiocytidine(32) in tRNA + L-cysteinyl-[cysteine desulfurase] + A + AMP + diphosphate + H(+). It functions in the pathway tRNA modification. Functionally, catalyzes the ATP-dependent 2-thiolation of cytidine in position 32 of tRNA, to form 2-thiocytidine (s(2)C32). The sulfur atoms are provided by the cysteine/cysteine desulfurase (IscS) system. The sequence is that of tRNA-cytidine(32) 2-sulfurtransferase from Bartonella tribocorum (strain CIP 105476 / IBS 506).